Consider the following 567-residue polypeptide: Proline--tRNA ligase (567 aa).

This sequence belongs to the class-II aminoacyl-tRNA synthetase family. ProS type 1 subfamily. Homodimer.

It is found in the cytoplasm. The enzyme catalyses tRNA(Pro) + L-proline + ATP = L-prolyl-tRNA(Pro) + AMP + diphosphate. Its function is as follows. Catalyzes the attachment of proline to tRNA(Pro) in a two-step reaction: proline is first activated by ATP to form Pro-AMP and then transferred to the acceptor end of tRNA(Pro). As ProRS can inadvertently accommodate and process non-cognate amino acids such as alanine and cysteine, to avoid such errors it has two additional distinct editing activities against alanine. One activity is designated as 'pretransfer' editing and involves the tRNA(Pro)-independent hydrolysis of activated Ala-AMP. The other activity is designated 'posttransfer' editing and involves deacylation of mischarged Ala-tRNA(Pro). The misacylated Cys-tRNA(Pro) is not edited by ProRS. The chain is Proline--tRNA ligase from Staphylococcus aureus (strain COL).